A 96-amino-acid chain; its full sequence is Co-chaperonin GroES (96 aa).

Belongs to the GroES chaperonin family. Heptamer of 7 subunits arranged in a ring. Interacts with the chaperonin GroEL.

The protein localises to the cytoplasm. Together with the chaperonin GroEL, plays an essential role in assisting protein folding. The GroEL-GroES system forms a nano-cage that allows encapsulation of the non-native substrate proteins and provides a physical environment optimized to promote and accelerate protein folding. GroES binds to the apical surface of the GroEL ring, thereby capping the opening of the GroEL channel. The polypeptide is Co-chaperonin GroES (Pelagibacter ubique (strain HTCC1062)).